The primary structure comprises 179 residues: MARLKELYHKEIVEQLTKDFGYSNVMQVPKIEKIVVNMGLGEAIQNVKILDSAVEELAAIAGQKAVITKAKKSIAGFKLRQGMPIGCMVTLRREKMYEFLDRLINVALPRVRDFKGVSAKGFDGRGNYSLGVKEQLIFPEINYDKIDKIKGLNITIVTSAKTDEESRALLKHLGMPFRH.

Belongs to the universal ribosomal protein uL5 family. In terms of assembly, part of the 50S ribosomal subunit; part of the 5S rRNA/L5/L18/L25 subcomplex. Contacts the 5S rRNA and the P site tRNA. Forms a bridge to the 30S subunit in the 70S ribosome.

In terms of biological role, this is one of the proteins that bind and probably mediate the attachment of the 5S RNA into the large ribosomal subunit, where it forms part of the central protuberance. In the 70S ribosome it contacts protein S13 of the 30S subunit (bridge B1b), connecting the 2 subunits; this bridge is implicated in subunit movement. Contacts the P site tRNA; the 5S rRNA and some of its associated proteins might help stabilize positioning of ribosome-bound tRNAs. The polypeptide is Large ribosomal subunit protein uL5 (Geobacter sulfurreducens (strain ATCC 51573 / DSM 12127 / PCA)).